The following is a 314-amino-acid chain: Beta-lactamase 2 (314 aa).

Positions 1–26 (MLHTRIRRATLGAVAALSLVPVMACG) are cleaved as a signal peptide. Residues 32–47 (DAAEPAGSAPSSSAAA) show a composition bias toward low complexity. The tract at residues 32-51 (DAAEPAGSAPSSSAAAHKPG) is disordered. Catalysis depends on Ser96, which acts as the Acyl-ester intermediate. 258–260 (KTG) contacts substrate.

It belongs to the class-A beta-lactamase family.

The enzyme catalyses a beta-lactam + H2O = a substituted beta-amino acid. The sequence is that of Beta-lactamase 2 (blaU) from Streptomyces cacaoi.